A 1463-amino-acid chain; its full sequence is DNA polymerase III PolC-type (1463 aa).

Residues 425–581 (YVVFDVETTG…YDAEATGRLL (157 aa)) enclose the Exonuclease domain.

Belongs to the DNA polymerase type-C family. PolC subfamily.

It localises to the cytoplasm. It catalyses the reaction DNA(n) + a 2'-deoxyribonucleoside 5'-triphosphate = DNA(n+1) + diphosphate. Functionally, required for replicative DNA synthesis. This DNA polymerase also exhibits 3' to 5' exonuclease activity. This Streptococcus suis (strain 98HAH33) protein is DNA polymerase III PolC-type.